Consider the following 165-residue polypeptide: Large ribosomal subunit protein uL10 (165 aa).

N6-acetyllysine is present on residues K37 and K105.

This sequence belongs to the universal ribosomal protein uL10 family. Part of the ribosomal stalk of the 50S ribosomal subunit. The N-terminus interacts with L11 and the large rRNA to form the base of the stalk. The C-terminus forms an elongated spine to which L12 dimers bind in a sequential fashion forming a multimeric L10(L12)X complex.

Functionally, protein L10 is also a translational repressor protein. It controls the translation of the rplJL-rpoBC operon by binding to its mRNA. In terms of biological role, forms part of the ribosomal stalk, playing a central role in the interaction of the ribosome with GTP-bound translation factors. This chain is Large ribosomal subunit protein uL10 (rplJ), found in Escherichia coli O6:H1 (strain CFT073 / ATCC 700928 / UPEC).